The chain runs to 273 residues: uncharacterized protein (273 aa).

A compositionally biased stretch (basic residues) spans 1 to 10 (MSSKKVKYNP). Disordered regions lie at residues 1–32 (MSSK…FGFN) and 50–124 (EDVE…QSSP). Composition is skewed to polar residues over residues 12–24 (KSAS…SASA), 55–64 (QSFNGKSSNL), and 92–124 (PQSS…QSSP). At serine 123 the chain carries Phosphoserine.

The protein resides in the nucleus. It localises to the cytoplasm. The protein localises to the cytoskeleton. Its subcellular location is the spindle. This is an uncharacterized protein from Schizosaccharomyces pombe (strain 972 / ATCC 24843) (Fission yeast).